A 293-amino-acid polypeptide reads, in one-letter code: Diaminopimelate epimerase (293 aa).

Asn-11 and Asn-78 together coordinate substrate. Cys-87 (proton donor) is an active-site residue. Residues 88-89 (GN), Asn-166, Asn-202, and 220-221 (ER) contribute to the substrate site. The Proton acceptor role is filled by Cys-229. 230 to 231 (GT) contributes to the substrate binding site.

It belongs to the diaminopimelate epimerase family. As to quaternary structure, homodimer.

It localises to the cytoplasm. It catalyses the reaction (2S,6S)-2,6-diaminopimelate = meso-2,6-diaminopimelate. It participates in amino-acid biosynthesis; L-lysine biosynthesis via DAP pathway; DL-2,6-diaminopimelate from LL-2,6-diaminopimelate: step 1/1. Its function is as follows. Catalyzes the stereoinversion of LL-2,6-diaminopimelate (L,L-DAP) to meso-diaminopimelate (meso-DAP), a precursor of L-lysine and an essential component of the bacterial peptidoglycan. This Mycobacterium sp. (strain JLS) protein is Diaminopimelate epimerase.